We begin with the raw amino-acid sequence, 243 residues long: MSSPAEYYKSLPPISKAYGTLCFFTTVLVQLQILHPLFLYLDYPLVFKKFEIWRLLTSFFFLAPFSMKFGIRLLMIARYGVMLEKGAFDKRTADFLWMMIFGAISLLVLSIIPLFNSFFLGIPMVSMLLYVWSRENPNAQINIYGLVQLRSFYLPWAMLLLDVIFGSSLMPGLLGIMVGHLYYFFAVLHPLATGKSYLKTPKWVHKIVARFRIGMQANSPVRPPANGNSGSGVFRGRSYRLNQ.

Over methionine 1–threonine 20 the chain is Cytoplasmic. The helical transmembrane segment at leucine 21–leucine 41 threads the bilayer. At aspartate 42–leucine 55 the chain is on the lumenal side. A helical transmembrane segment spans residues leucine 56–isoleucine 76. Residues alanine 77–aspartate 94 lie on the Cytoplasmic side of the membrane. The chain crosses the membrane as a helical span at residues phenylalanine 95–phenylalanine 115. The Lumenal segment spans residues asparagine 116–alanine 157. The helical transmembrane segment at methionine 158–valine 178 threads the bilayer. At glycine 179 to glutamine 243 the chain is on the cytoplasmic side. Residues serine 219 to glutamine 243 are disordered.

The protein belongs to the derlin family. Expressed in roots, stalks, leaves, immature ears, embryo and endosperm.

It is found in the endoplasmic reticulum membrane. In terms of biological role, may be involved in the degradation process of specific misfolded endoplasmic reticulum (ER) luminal proteins. This chain is Derlin-1.1 (DER1.1), found in Zea mays (Maize).